Reading from the N-terminus, the 139-residue chain is Class I hydrophobin 1 (139 aa).

The first 21 residues, 1–21 (MFFRISTVFVVALAAFAAASP), serve as a signal peptide directing secretion. Cystine bridges form between C57-C118, C64-C112, C65-C98, and C119-C132.

This sequence belongs to the fungal hydrophobin family. As to quaternary structure, self-assembles to form functional amyloid fibrils called rodlets. Self-assembly into fibrillar rodlets occurs spontaneously at hydrophobic:hydrophilic interfaces and the rodlets further associate laterally to form amphipathic monolayers.

Its subcellular location is the secreted. The protein resides in the cell wall. Its function is as follows. Aerial growth, conidiation, and dispersal of filamentous fungi in the environment rely upon a capability of their secreting small amphipathic proteins called hydrophobins (HPBs) with low sequence identity. Class I can self-assemble into an outermost layer of rodlet bundles on aerial cell surfaces, conferring cellular hydrophobicity that supports fungal growth, development and dispersal; whereas Class II form highly ordered films at water-air interfaces through intermolecular interactions but contribute nothing to the rodlet structure. Hah1 is a class I hydrophobin that is involved in aerial growth of mycelia, but does not play a role in pathogenesis. The sequence is that of Class I hydrophobin 1 from Heterobasidion annosum (Root rot fungus).